A 974-amino-acid polypeptide reads, in one-letter code: Pentatricopeptide repeat-containing protein At5g61990, mitochondrial (974 aa).

Residues 1–31 (MMGSMLFRKRTLVTRANFLLFRSFSVNVEKL) constitute a mitochondrion transit peptide. 24 PPR repeats span residues 96 to 130 (KLDS…NWPV), 150 to 184 (DGVL…ELVP), 185 to 219 (RLSR…NVVF), 220 to 250 (DVKT…TEKE), 257 to 275 (NVDG…GLVP), 276 to 310 (LKYT…GVSL), 311 to 345 (DNHT…GINI), 346 to 380 (KPYM…GLIP), 381 to 415 (QAQA…NIVI), 416 to 450 (SPYT…GCRP), 451 to 485 (NVVI…GIAP), 486 to 520 (DIFC…GLKP), 521 to 555 (NAFT…GVLP), 556 to 590 (NKVL…GILG), 591 to 625 (DAKT…GIAP), 626 to 660 (DVFS…GLTP), 661 to 695 (NVII…GLHP), 696 to 730 (NAVT…GLVP), 731 to 761 (DSFV…NKKG), 765 to 799 (STAP…SFDR), 804 to 838 (NDVT…NLMP), 839 to 873 (TVIT…GIEP), 874 to 908 (DHIM…NAVD), and 914 to 948 (SIST…QYIP).

The protein belongs to the PPR family. P subfamily.

The protein resides in the mitochondrion. The polypeptide is Pentatricopeptide repeat-containing protein At5g61990, mitochondrial (Arabidopsis thaliana (Mouse-ear cress)).